We begin with the raw amino-acid sequence, 142 residues long: Large ribosomal subunit protein uL13 (142 aa).

Belongs to the universal ribosomal protein uL13 family. In terms of assembly, part of the 50S ribosomal subunit.

Its function is as follows. This protein is one of the early assembly proteins of the 50S ribosomal subunit, although it is not seen to bind rRNA by itself. It is important during the early stages of 50S assembly. This is Large ribosomal subunit protein uL13 from Pseudomonas entomophila (strain L48).